We begin with the raw amino-acid sequence, 208 residues long: Ribosomal RNA small subunit methyltransferase G (208 aa).

Residues Gly78, Phe83, 101–103 (ERS), 129–130 (IE), and Arg142 contribute to the S-adenosyl-L-methionine site.

Belongs to the methyltransferase superfamily. RNA methyltransferase RsmG family.

The protein localises to the cytoplasm. Functionally, specifically methylates the N7 position of a guanine in 16S rRNA. The chain is Ribosomal RNA small subunit methyltransferase G from Borreliella burgdorferi (strain ATCC 35210 / DSM 4680 / CIP 102532 / B31) (Borrelia burgdorferi).